The primary structure comprises 188 residues: uncharacterized protein (188 aa).

It belongs to the isochorismatase family.

This is an uncharacterized protein from Escherichia coli O157:H7.